The sequence spans 236 residues: Leucyl/phenylalanyl-tRNA--protein transferase (236 aa).

The protein belongs to the L/F-transferase family.

Its subcellular location is the cytoplasm. It carries out the reaction N-terminal L-lysyl-[protein] + L-leucyl-tRNA(Leu) = N-terminal L-leucyl-L-lysyl-[protein] + tRNA(Leu) + H(+). It catalyses the reaction N-terminal L-arginyl-[protein] + L-leucyl-tRNA(Leu) = N-terminal L-leucyl-L-arginyl-[protein] + tRNA(Leu) + H(+). The catalysed reaction is L-phenylalanyl-tRNA(Phe) + an N-terminal L-alpha-aminoacyl-[protein] = an N-terminal L-phenylalanyl-L-alpha-aminoacyl-[protein] + tRNA(Phe). Its function is as follows. Functions in the N-end rule pathway of protein degradation where it conjugates Leu, Phe and, less efficiently, Met from aminoacyl-tRNAs to the N-termini of proteins containing an N-terminal arginine or lysine. The chain is Leucyl/phenylalanyl-tRNA--protein transferase from Shewanella pealeana (strain ATCC 700345 / ANG-SQ1).